The chain runs to 132 residues: Flagellar basal body rod protein FlgB (132 aa).

It belongs to the flagella basal body rod proteins family. As to quaternary structure, the basal body constitutes a major portion of the flagellar organelle and consists of a number of rings mounted on a central rod. In Gram-negative bacteria, at least four rings, L, P, S and M are present, whereas Gram-positive bacteria lack the L and P rings. The rod consists of about 26 subunits of FlgG in the distal portion, and FlgB, FlgC and FlgF build up the proximal portion of the rod with about 6 subunits each. Rod assembly occurs by export via the flagellum-specific pathway of its constituent proteins and by their incorporation into the rod structure in the probable order of FlgB, FlgC, FlgF and FlgG. Another protein, FliE, also assembles onto the stable rod structure.

The protein resides in the bacterial flagellum basal body. Functionally, structural component of flagellum, the bacterial motility apparatus. Part of the rod structure of flagellar basal body. In Aeromonas hydrophila, this protein is Flagellar basal body rod protein FlgB.